Reading from the N-terminus, the 866-residue chain is Autophagy-related protein 9 (866 aa).

Over 1–94 (MMSSGHKGPN…KGLWCIIVKW (94 aa)) the chain is Cytoplasmic. A helical transmembrane segment spans residues 95–115 (AVELLSLGFIICFSGFFLLYV). Over 116–153 (DWNGLQNAKCGMDAVESGTKPCDLVKEAIHPHPLSPFT) the chain is Lumenal. A helical membrane pass occupies residues 154 to 174 (LTTAIIVGYLALFSVYWLFCF). Residues 175–319 (LRFFAQLKDT…VSNPTTLKKR (145 aa)) lie on the Cytoplasmic side of the membrane. Residues 320–340 (LFVVGLAMLLLSPFLVIFMLV) lie within the membrane without spanning it. Residues 341–404 (YLFLRHAEQF…LKQFPSPIIS (64 aa)) are Cytoplasmic-facing. The helical transmembrane segment at 405–425 (IIAKFVSFVSGGFAAVLIIIA) threads the bilayer. The Lumenal portion of the chain corresponds to 426 to 433 (FLEESLLE). Residues 434–454 (GHIFGRNLFWYAAVFGTITAI) traverse the membrane as a helical segment. Over 455–507 (SRAAISDELLVLDPVGTMSLVVQNTHYMPKRWRGKENKDDVRLELETLFQYTG) the chain is Cytoplasmic. Residues 508-528 (MMLLEEIASIFITPFLLMFVV) lie within the membrane without spanning it. Residues 529–866 (PKRVDDILQF…ETSTSSTTLR (338 aa)) are Cytoplasmic-facing. Residues 744-781 (QPEGEDSYGSQHPLDGRNQWWGRGNHSQISTAHPATTN) form a disordered region. A compositionally biased stretch (polar residues) spans 768–781 (NHSQISTAHPATTN).

Belongs to the ATG9 family. In terms of assembly, homotrimer; forms a homotrimer with a central pore that forms a path between the two membrane leaflets. In terms of tissue distribution, expressed in roots, leaves, stems and flowers.

The protein localises to the preautophagosomal structure membrane. Its function is as follows. Phospholipid scramblase involved in autophagy by mediating autophagosomal membrane expansion. Cycles between the preautophagosomal structure/phagophore assembly site (PAS) and the cytoplasmic vesicle pool and supplies membrane for the growing autophagosome. Lipid scramblase activity plays a key role in preautophagosomal structure/phagophore assembly by distributing the phospholipids that arrive through ATG2 from the cytoplasmic to the luminal leaflet of the bilayer, thereby driving autophagosomal membrane expansion. In addition to autophagy, also plays a role in necrotic cell death. Plays an essential role in plant nutrient recycling. This Arabidopsis thaliana (Mouse-ear cress) protein is Autophagy-related protein 9.